A 57-amino-acid polypeptide reads, in one-letter code: U13-myrmicitoxin-Mri1a (57 aa).

The first 23 residues, 1–23 (MKIIHVLLLVAVVAITMSPSIMA), serve as a signal peptide directing secretion. Positions 24–29 (ESVAEA) are excised as a propeptide. At E56 the chain carries Glutamic acid 1-amide.

As to expression, expressed by the venom gland.

It is found in the secreted. Functionally, induces paralysis 1 hour after injection into insects (blowfly L.caesar) but does not appear to be lethal. The protein is U13-myrmicitoxin-Mri1a of Manica rubida (European giant red ant).